The primary structure comprises 320 residues: Malate dehydrogenase (320 aa).

Residues 10–15 (GAGQIG) and aspartate 34 each bind NAD(+). Residues arginine 83 and arginine 89 each contribute to the substrate site. NAD(+)-binding positions include asparagine 96 and 119–121 (ITN). Substrate is bound by residues asparagine 121 and arginine 152. The active-site Proton acceptor is the histidine 176.

It belongs to the LDH/MDH superfamily. MDH type 3 family.

It carries out the reaction (S)-malate + NAD(+) = oxaloacetate + NADH + H(+). Its function is as follows. Catalyzes the reversible oxidation of malate to oxaloacetate. The chain is Malate dehydrogenase from Cereibacter sphaeroides (strain ATCC 17029 / ATH 2.4.9) (Rhodobacter sphaeroides).